We begin with the raw amino-acid sequence, 1117 residues long: Lid2 complex component snt2 (1117 aa).

Residues 89 to 208 (ELIQPNDFVL…QNINKVFDVV (120 aa)) enclose the BAH domain. The Phorbol-ester/DAG-type zinc-finger motif lies at 227 to 282 (NYDFIVTEYGKGRALLNEPSNCKVCKKWCAFDFSVQCADCKKYYHMDCVVPPLLKK). The PHD-type 1 zinc-finger motif lies at 245 to 297 (PSNCKVCKKWCAFDFSVQCADCKKYYHMDCVVPPLLKKPPHGFGWTCATCSFA). The segment at 361–380 (SSRNLHQQSRKSLDENKPNS) is disordered. A PHD-type 2 zinc finger spans residues 798 to 882 (KKCCALCGIV…SWACLSCRSN (85 aa)). The segment at 890–925 (DNHCVLCLQSASHSLMKKTVEGNWVHLICASWTPDV) adopts a C2HC pre-PHD-type zinc-finger fold. Residues 948-1002 (KKCEVCGNSFGVCVSSPNSGLTSHVTCAEKANWYLGFEFVKQDQSPFSMLSNLKS) form a PHD-type 3; degenerate zinc finger.

Component of the Lid2 complex composed of ash2, jmj3, lid2, sdc1 and snt2.

It is found in the nucleus. The chain is Lid2 complex component snt2 (snt2) from Schizosaccharomyces pombe (strain 972 / ATCC 24843) (Fission yeast).